A 152-amino-acid chain; its full sequence is Transcriptional regulator MraZ (152 aa).

SpoVT-AbrB domains lie at 5–52 and 81–124; these read ASAI…PADE and AHEI…DEAQ.

Belongs to the MraZ family. Forms oligomers.

It localises to the cytoplasm. Its subcellular location is the nucleoid. The polypeptide is Transcriptional regulator MraZ (Shewanella amazonensis (strain ATCC BAA-1098 / SB2B)).